A 348-amino-acid polypeptide reads, in one-letter code: Rhodopsin (348 aa).

An N-acetylmethionine modification is found at Met-1. The Extracellular portion of the chain corresponds to 1-36 (MNGTEGPDFYIPMSNQTGVVRSPFEYPQYYLAEPWQ). Residues Asn-2 and Asn-15 are each glycosylated (N-linked (GlcNAc...) asparagine). A helical membrane pass occupies residues 37–61 (FSMLAAYMFLLIVLGFPINFLTLYV). Residues 62–73 (TVQHKKLRTPLN) lie on the Cytoplasmic side of the membrane. Residues 74 to 96 (YILLNLAVADLFMVLGGFTTTLY) form a helical membrane-spanning segment. Residues 97-110 (TSLHGYFVFGPTGC) are Extracellular-facing. An intrachain disulfide couples Cys-110 to Cys-187. The helical transmembrane segment at 111-133 (NVEGFFATLGGEIALWSLVVLAI) threads the bilayer. A 'Ionic lock' involved in activated form stabilization motif is present at residues 134 to 136 (ERY). The Cytoplasmic segment spans residues 134–152 (ERYVVVCKPMSNFRFGENH). Residues 153–173 (AIMGVAFTWIMALACAAPPLV) form a helical membrane-spanning segment. At 174-202 (GWSRYIPEGMQCSCGIDYYTLKPEVNNES) the chain is on the extracellular side. A Zn(2+)-binding site is contributed by Glu-201. A helical transmembrane segment spans residues 203 to 224 (FVIYMFVVHFTIPLIIIFFCYG). Over 225-252 (QLVFTVKEAAAQQQESATTQKAEKEVTR) the chain is Cytoplasmic. The chain crosses the membrane as a helical span at residues 253-274 (MVIIMVIAFLICWVPYASVAFY). Residues 275-286 (IFTHQGSNFGPI) lie on the Extracellular side of the membrane. Gln-279 is a binding site for Zn(2+). Residues 287–308 (FMTIPAFFAKSSSIYNPVIYIM) traverse the membrane as a helical segment. Residue Lys-296 is modified to N6-(retinylidene)lysine. At 309–348 (MNKQFRNCMLTTICCGKNPLGDDEASATASKTETSQVAPA) the chain is on the cytoplasmic side. Residues Cys-322 and Cys-323 are each lipidated (S-palmitoyl cysteine). Residues 330-348 (DDEASATASKTETSQVAPA) are interaction with SAG. Ser-334 is modified (phosphoserine). Position 336 is a phosphothreonine (Thr-336). Ser-338 bears the Phosphoserine mark. Residues Thr-340 and Thr-342 each carry the phosphothreonine modification. The residue at position 343 (Ser-343) is a Phosphoserine.

It belongs to the G-protein coupled receptor 1 family. Opsin subfamily. As to quaternary structure, homodimer. May form a complex composed of RHO, GRK1 and RCVRN in a Ca(2+)-dependent manner; RCVRN prevents the interaction between GRK1 and RHO. Interacts with GRK1. Interacts (phosphorylated form) with SAG. Interacts with GNAT1. Interacts with GNAT3. SAG and G-proteins compete for a common binding site. Interacts with PRCD; the interaction promotes PRCD stability. Forms a complex with ASAP1 and ARF4. Forms a complex with ASAP1, RAB11A, Rabin8/RAB3IP, ARF4 and RAB11FIP3; the complex regulates Golgi-to-cilia rhodopsin/RHO transport in photoreceptors. Post-translationally, phosphorylated on some or all of the serine and threonine residues present in the C-terminal region. Contains one covalently linked retinal chromophore. Upon light absorption, the covalently bound 11-cis-retinal is converted to all-trans-retinal. After hydrolysis of the Schiff base and release of the covalently bound all-trans-retinal, active rhodopsin is regenerated by binding of a fresh molecule of 11-cis-retinal.

The protein resides in the membrane. The protein localises to the cell projection. Its subcellular location is the cilium. It is found in the photoreceptor outer segment. Its function is as follows. Photoreceptor required for image-forming vision at low light intensity. Required for photoreceptor cell viability after birth. Light-induced isomerization of 11-cis to all-trans retinal triggers a conformational change that activates signaling via G-proteins. Subsequent receptor phosphorylation mediates displacement of the bound G-protein alpha subunit by the arrestin SAG and terminates signaling. In Oryctolagus cuniculus (Rabbit), this protein is Rhodopsin (RHO).